We begin with the raw amino-acid sequence, 239 residues long: tRNA (guanine-N(7)-)-methyltransferase (239 aa).

S-adenosyl-L-methionine-binding residues include Glu69, Glu94, Asp121, and Asp144. Residue Asp144 is part of the active site. Residue Lys148 coordinates substrate. The interaction with RNA stretch occupies residues 150–155 (RHNKRR). Residues Asp180 and 217 to 220 (TKFE) contribute to the substrate site.

The protein belongs to the class I-like SAM-binding methyltransferase superfamily. TrmB family. In terms of assembly, monomer.

It carries out the reaction guanosine(46) in tRNA + S-adenosyl-L-methionine = N(7)-methylguanosine(46) in tRNA + S-adenosyl-L-homocysteine. It participates in tRNA modification; N(7)-methylguanine-tRNA biosynthesis. Its function is as follows. Catalyzes the formation of N(7)-methylguanine at position 46 (m7G46) in tRNA. The chain is tRNA (guanine-N(7)-)-methyltransferase from Salmonella paratyphi A (strain ATCC 9150 / SARB42).